The following is a 545-amino-acid chain: Hydroxylamine reductase (545 aa).

4 residues coordinate [4Fe-4S] cluster: C7, C10, C19, and C25. 8 residues coordinate hybrid [4Fe-2O-2S] cluster: H241, E265, C309, C400, C428, C453, E488, and K490. At C400 the chain carries Cysteine persulfide; in oxidized form.

It belongs to the HCP family. In terms of assembly, monomer. The cofactor is [4Fe-4S] cluster. Hybrid [4Fe-2O-2S] cluster is required as a cofactor.

Its subcellular location is the cytoplasm. The enzyme catalyses A + NH4(+) + H2O = hydroxylamine + AH2 + H(+). Functionally, catalyzes the reduction of hydroxylamine to form NH(3) and H(2)O. This is Hydroxylamine reductase from Desulfovibrio desulfuricans (strain ATCC 27774 / DSM 6949 / MB).